Here is a 3189-residue protein sequence, read N- to C-terminus: Beauvericin nonribosomal cyclodepsipeptide synthetase (3189 aa).

A condensation 1 region spans residues 73–466; that stretch reads HAMYEISQHV…EQLQSAADDA (394 aa). The interval 202–223 is disordered; the sequence is DSLPLTPDSSGGSDSDSPSTLK. The segment covering 208–220 has biased composition (low complexity); the sequence is PDSSGGSDSDSPS. Residues 507 to 901 form an adenylation 1 region; the sequence is AESPSDPAVL…GRIDSQVKIR (395 aa). Positions 1036 to 1112 constitute a Carrier 1 domain; sequence TLETGPEARL…RLQAVMSGDS (77 aa). Residue Ser1073 is modified to O-(pantetheine 4'-phosphoryl)serine. Residues 1136 to 1569 are condensation 2; it reads SYSQGRLWFL…KSLISVLPLT (434 aa). The adenylation 2 stretch occupies residues 1599–2004; sequence FRSQVATCPD…GRMDFQFKIR (406 aa). The tract at residues 2072–2211 is S-adenosyl-L-methionine-dependent N-methyltransferase; the sequence is MYNGIDAISP…FPTVEYLTRV (140 aa). 2 consecutive Carrier domains span residues 2557–2631 and 2654–2728; these read CPIS…REGL and APRN…ELGQ. An O-(pantetheine 4'-phosphoryl)serine mark is found at Ser2591 and Ser2688. Positions 2773-3181 are condensation 3; that stretch reads QDVYPATHMQ…AYLMEEVCRL (409 aa).

Belongs to the NRP synthetase family.

It catalyses the reaction 3 (R)-2-hydroxy-3-methylbutanoate + 3 L-phenylalanine + 3 S-adenosyl-L-methionine + 6 ATP = beauvericin + 6 AMP + 3 S-adenosyl-L-homocysteine + 6 diphosphate + 6 H(+). In terms of biological role, beauvericin nonribosomal cyclodepsipeptide synthetase; part of the gene cluster that mediates the biosynthesis of beauvericin (BEA), a non-ribosomal cyclic hexadepsipeptide that shows antibiotic, antifungal, insecticidal, and cancer cell antiproliferative and antihaptotactic activity. Ketoisovalerate reductase BEA2 catalyzes the NADPH-specific reduction of ketoisovaleric acid to hydroxyisovalerate, a precursor for beauvericin biosynthesis. The nonribosomal cyclodepsipeptide synthetase BEA1 then catalyzes the formation of beauvericin via condensation and cyclization of 3 dipeptidol monomers, each composed of one unit of hydroxyisovalerate and one unit of N-methyl-phenylalanine. This chain is Beauvericin nonribosomal cyclodepsipeptide synthetase (Beas), found in Beauveria bassiana (White muscardine disease fungus).